Reading from the N-terminus, the 264-residue chain is Glutamate racemase (264 aa).

Substrate is bound by residues 10–11 (DS) and 42–43 (YG). Cysteine 73 functions as the Proton donor/acceptor in the catalytic mechanism. Residue 74 to 75 (NT) coordinates substrate. Catalysis depends on cysteine 183, which acts as the Proton donor/acceptor. 184–185 (TH) provides a ligand contact to substrate.

Belongs to the aspartate/glutamate racemases family.

The catalysed reaction is L-glutamate = D-glutamate. Its pathway is cell wall biogenesis; peptidoglycan biosynthesis. Its function is as follows. Provides the (R)-glutamate required for cell wall biosynthesis. In Streptococcus suis (strain 98HAH33), this protein is Glutamate racemase.